The sequence spans 485 residues: MFS-type transporter phm3 (485 aa).

The disordered stretch occupies residues 1–22 (MSLQDPTKEHNNTSPSPKDEKT). The next 12 membrane-spanning stretches (helical) occupy residues 55 to 75 (FTLY…LLVA), 83 to 103 (IVAS…PFLL), 113 to 133 (LWLY…CALS), 144 to 164 (FICG…IADL), 175 to 195 (ALFG…GGFV), 203 to 223 (WTFY…AVIM), 278 to 298 (PIVL…YLLF), 317 to 337 (GLAF…FAIL), 357 to 377 (LVLM…YGWS), 384 to 404 (WIVP…ILMP), 421 to 441 (ALAV…LAGP), and 449 to 469 (LGWG…VPFV).

The protein belongs to the major facilitator superfamily.

It is found in the cell membrane. In terms of biological role, MFS-type transporter; part of the gene cluster that mediates the biosynthesis of the trans-fused decalin-containing tetramic acid phomasetin. The chain is MFS-type transporter phm3 from Pyrenochaetopsis sp.